The chain runs to 131 residues: Fluoride-specific ion channel FluC 2 (131 aa).

A run of 4 helical transmembrane segments spans residues 5-25 (FGVA…SLLV), 39-59 (LATL…TTLA), 70-90 (LAVG…AWES), and 104-124 (LYVL…RALA). Na(+) is bound by residues G78 and T81.

Belongs to the fluoride channel Fluc/FEX (TC 1.A.43) family.

The protein localises to the cell membrane. It catalyses the reaction fluoride(in) = fluoride(out). Its activity is regulated as follows. Na(+) is not transported, but it plays an essential structural role and its presence is essential for fluoride channel function. Functionally, fluoride-specific ion channel. Important for reducing fluoride concentration in the cell, thus reducing its toxicity. The sequence is that of Fluoride-specific ion channel FluC 2 from Deinococcus geothermalis (strain DSM 11300 / CIP 105573 / AG-3a).